The chain runs to 471 residues: UDP-N-acetylmuramoylalanine--D-glutamate ligase (471 aa).

135–141 (GTNGKTT) provides a ligand contact to ATP.

It belongs to the MurCDEF family.

The protein resides in the cytoplasm. The catalysed reaction is UDP-N-acetyl-alpha-D-muramoyl-L-alanine + D-glutamate + ATP = UDP-N-acetyl-alpha-D-muramoyl-L-alanyl-D-glutamate + ADP + phosphate + H(+). Its pathway is cell wall biogenesis; peptidoglycan biosynthesis. Its function is as follows. Cell wall formation. Catalyzes the addition of glutamate to the nucleotide precursor UDP-N-acetylmuramoyl-L-alanine (UMA). This chain is UDP-N-acetylmuramoylalanine--D-glutamate ligase, found in Frankia casuarinae (strain DSM 45818 / CECT 9043 / HFP020203 / CcI3).